A 150-amino-acid chain; its full sequence is Peptide deformylase (150 aa).

Positions 88 and 130 each coordinate Fe cation. The active site involves Glu-131. His-134 lines the Fe cation pocket.

Belongs to the polypeptide deformylase family. Fe(2+) serves as cofactor.

It carries out the reaction N-terminal N-formyl-L-methionyl-[peptide] + H2O = N-terminal L-methionyl-[peptide] + formate. Removes the formyl group from the N-terminal Met of newly synthesized proteins. Requires at least a dipeptide for an efficient rate of reaction. N-terminal L-methionine is a prerequisite for activity but the enzyme has broad specificity at other positions. In Desulfitobacterium hafniense (strain Y51), this protein is Peptide deformylase.